The following is a 354-amino-acid chain: Guanine nucleotide-binding protein G(i) subunit alpha-1 (354 aa).

Residue Gly-2 is the site of N-myristoyl glycine attachment. Cys-3 carries the S-palmitoyl cysteine lipid modification. Positions Arg-32–Phe-354 constitute a G-alpha domain. The G1 motif stretch occupies residues Lys-35–Thr-48. Residues Glu-43–Thr-48, Asp-150–Ser-151, and Leu-175–Arg-178 each bind GTP. Ser-47 contacts Mg(2+). Positions Asp-173 to Thr-181 are G2 motif. Thr-181 is a Mg(2+) binding site. Residues Phe-196 to Arg-205 form a G3 motif region. Residues Asp-200 to Gln-204, Asn-269 to Asp-272, and Ala-326 each bind GTP. A G4 motif region spans residues Ile-265–Asp-272. The interval Thr-324 to Thr-329 is G5 motif.

This sequence belongs to the G-alpha family. G(i/o/t/z) subfamily. In terms of assembly, heterotrimeric G proteins are composed of 3 units; alpha, beta and gamma. The alpha chain contains the guanine nucleotide binding site. Part of a spindle orientation complex at least composed of GNAI1, GPSM2 and NUMA1. Identified in complex with the beta subunit GNB1 and the gamma subunit GNG1. Identified in complex with the beta subunit GNB1 and the gamma subunit GNG2. Component of the TAS2R14-GNAI1 complex, consisting of TAS2R14, GNAI1, GNB1 and GNG2; within the complex interacts with TAS2R14; this complex plays a role in the perception of bitterness. GTP binding causes dissociation of the heterotrimer, liberating the individual subunits so that they can interact with downstream effector proteins. Interacts (GDP-bound form) with GPSM1; this inhibits guanine nucleotide exchange and GTP binding. Interacts (GDP-bound form) with GPSM2 (via GoLoco domains); this inhibits guanine nucleotide exchange. Interacts with RGS10; this strongly enhances GTP hydrolysis. Interacts with RGS1 and RGS16; this strongly enhances GTPase activity. Interacts with RGS4. Interacts with RGS12. Interacts (via active GTP- or inactive GDP-bound forms) with RGS14 (via RGS and GoLoco domains). Interacts with RGS3, RGS6, RGS7, RGS8, RGS17, RGS18 and RGS20 (in vitro). Interacts (GDP-bound form) with RIC8A (via C-terminus); promoting GNAI1 folding and association with the plasma membrane. Interacts (inactive GDP-bound form) with NUCB1 (via GBA motif); the interaction leads to activation of GNAI1. Interacts (inactive GDP-bound form) with CCDC88C/DAPLE (via GBA motif); the interaction leads to activation of GNAI1. Interacts (inactive GDP-bound form) with CCDC8A/GIV (via GBA motif). Myristoylation at Gly-2 is required for membrane anchoring before palmitoylation. In terms of processing, palmitoylation at Cys-3 varies with membrane lipid composition. As to expression, mainly expressed in the brain, lung and kidney.

The protein resides in the nucleus. Its subcellular location is the cytoplasm. It localises to the cell membrane. The protein localises to the cytoskeleton. It is found in the microtubule organizing center. The protein resides in the centrosome. Its subcellular location is the cell cortex. It localises to the membrane. The enzyme catalyses GTP + H2O = GDP + phosphate + H(+). Guanine nucleotide-binding proteins (G proteins) function as transducers downstream of G protein-coupled receptors (GPCRs) in numerous signaling cascades. The alpha chain contains the guanine nucleotide binding site and alternates between an active, GTP-bound state and an inactive, GDP-bound state. Signaling by an activated GPCR promotes GDP release and GTP binding. The alpha subunit has a low GTPase activity that converts bound GTP to GDP, thereby terminating the signal. Both GDP release and GTP hydrolysis are modulated by numerous regulatory proteins. Signaling is mediated via effector proteins, such as adenylate cyclase. Inhibits adenylate cyclase activity of ADCY1, ADCY5 and ADCY6, leading to decreased intracellular cAMP levels. The inactive GDP-bound form prevents the association of RGS14 with centrosomes and is required for the translocation of RGS14 from the cytoplasm to the plasma membrane. Required for normal cytokinesis during mitosis. Required for cortical dynein-dynactin complex recruitment during metaphase. This chain is Guanine nucleotide-binding protein G(i) subunit alpha-1 (GNAI1), found in Cavia porcellus (Guinea pig).